A 93-amino-acid polypeptide reads, in one-letter code: Precursor of CEP13 (93 aa).

Positions 1-27 are cleaved as a signal peptide; sequence MARPRISISMICLLILIVGFVLQSSQA. The propeptide occupies 28–78; sequence RKVLVPYGTSKGLFLSALPKGNVPPSGPSDKGHTSPPDDTDQRMVPENSPE. Residues 45–93 form a disordered region; the sequence is LPKGNVPPSGPSDKGHTSPPDDTDQRMVPENSPEIYRRLESVPSPGVGH. Hydroxyproline is present on residues proline 87 and proline 89.

Belongs to the C-terminally encoded plant signaling peptide (CEP) family. Interacts with CEP receptors (e.g. CEPR1 and CEPR2). In terms of processing, the mature small signaling peptide is generated by proteolytic processing of the longer precursor.

It localises to the secreted. It is found in the extracellular space. Its subcellular location is the apoplast. Its function is as follows. Extracellular signaling peptide that may regulate primary root growth rate and systemic nitrogen (N)-demand signaling. The protein is Precursor of CEP13 of Arabidopsis thaliana (Mouse-ear cress).